A 901-amino-acid chain; its full sequence is Protein translocase subunit SecA (901 aa).

Residues glutamine 87, 105–109 (GEGKT), and aspartate 512 contribute to the ATP site. Residues cysteine 885, cysteine 887, cysteine 896, and histidine 897 each contribute to the Zn(2+) site.

The protein belongs to the SecA family. Monomer and homodimer. Part of the essential Sec protein translocation apparatus which comprises SecA, SecYEG and auxiliary proteins SecDF-YajC and YidC. The cofactor is Zn(2+).

The protein resides in the cell inner membrane. It is found in the cytoplasm. It carries out the reaction ATP + H2O + cellular proteinSide 1 = ADP + phosphate + cellular proteinSide 2.. Functionally, part of the Sec protein translocase complex. Interacts with the SecYEG preprotein conducting channel. Has a central role in coupling the hydrolysis of ATP to the transfer of proteins into and across the cell membrane, serving both as a receptor for the preprotein-SecB complex and as an ATP-driven molecular motor driving the stepwise translocation of polypeptide chains across the membrane. This chain is Protein translocase subunit SecA, found in Salmonella enteritidis PT4 (strain P125109).